The sequence spans 85 residues: U4-theraphotoxin-Hhn1ab (85 aa).

The signal sequence occupies residues 1–22 (MKVTLIAILTCAAVLVLHTTAA). The propeptide occupies 23-48 (EELEAESQLMEVGMPDTELAAVDEER). Intrachain disulfides connect cysteine 56–cysteine 77 and cysteine 71–cysteine 82.

Belongs to the neurotoxin 12 (Hwtx-2) family. 02 (Hwtx-2) subfamily. As to expression, expressed by the venom gland.

It localises to the secreted. Postsynaptic neurotoxin. In Cyriopagopus hainanus (Chinese bird spider), this protein is U4-theraphotoxin-Hhn1ab.